Reading from the N-terminus, the 176-residue chain is dCTP deaminase (176 aa).

DCTP-binding positions include 99-104 (RSTLAR) and aspartate 115. Glutamate 125 functions as the Proton donor/acceptor in the catalytic mechanism. Glutamine 163 contacts dCTP.

It belongs to the dCTP deaminase family. Homotrimer.

The enzyme catalyses dCTP + H2O + H(+) = dUTP + NH4(+). It functions in the pathway pyrimidine metabolism; dUMP biosynthesis; dUMP from dCTP (dUTP route): step 1/2. Functionally, catalyzes the deamination of dCTP to dUTP. The protein is dCTP deaminase of Pyrobaculum arsenaticum (strain DSM 13514 / JCM 11321 / PZ6).